Reading from the N-terminus, the 275-residue chain is MAIVKVKPTSPGRRAMVKVVNKNLHQGKPFAALLDSQSSTAGRNNNGRITTRHKGGGHKQHYRIVDFRRTKDGIPAKVERLEYDPNRSANIALVLYADGERRYIIAPKGLTVGQQLMSGSEAPIRAGNTLPIRNIPVGTTIHCIEMLPGKGAQMARSAGTSAMLLAREGVYAQVRLRSGEIRRVHIECRATIGEVGNEEHSLRQIGKAGANRWRGIRPTVRGVAMNPVDHPHGGGEGKTAAGRDPVSPWGTPAKGYRTRSNKRTTTMIVQRRHKR.

Positions 35 to 49 (DSQSSTAGRNNNGRI) are enriched in polar residues. Disordered stretches follow at residues 35-59 (DSQS…GGHK) and 224-275 (AMNP…RHKR). Residues 50-59 (TTRHKGGGHK) show a composition bias toward basic residues.

The protein belongs to the universal ribosomal protein uL2 family. Part of the 50S ribosomal subunit. Forms a bridge to the 30S subunit in the 70S ribosome.

In terms of biological role, one of the primary rRNA binding proteins. Required for association of the 30S and 50S subunits to form the 70S ribosome, for tRNA binding and peptide bond formation. It has been suggested to have peptidyltransferase activity; this is somewhat controversial. Makes several contacts with the 16S rRNA in the 70S ribosome. This is Large ribosomal subunit protein uL2 from Burkholderia orbicola (strain AU 1054).